The following is a 434-amino-acid chain: MPGDHAGAGAAVGAAKAMQLKVLMPSSFHKMRISDELAADLLGERGDGGGGGGGAPRRAARVVSPVGKVWDVEVGRDDDGDGGGAFLGRGWAEFAAAHGLGMGWFVVVRHEGGGVLTVKLFDTTCCLWDFGARPAVVTTRSGRARDASNKPQFLRVLLPGFMEKMRIPAKFVQHYIAEEHLNIHMASILSPLGKFWRIELEKDELGMFFKGGWLQFLSFHGISPGDVVLLRHEGNLVFKIKVFGINGCKKDLKTKDDITIQQSARNQHETPSFSTRKCNKNSRFGEDCKNQLQEIPCSIKGSRKKGRETKRPKKSKSIYEIGPPSWIKKEISNYMLENGNISLPGIFCKSIGLVEETTITLMINSSRGRSSSSSSRSWEVACSVNKNGYGCCNLLPSGWKRFCQANGLLVGDVCTFSVVEATLWHVAIDRVERS.

3 DNA-binding regions (TF-B3) span residues 27–124 (SFHK…FDTT), 150–246 (KPQF…FGIN), and 326–432 (WIKK…DRVE).

It is found in the nucleus. This chain is Putative B3 domain-containing protein Os04g0347400, found in Oryza sativa subsp. japonica (Rice).